Here is a 412-residue protein sequence, read N- to C-terminus: Gamma-glutamyl phosphate reductase (412 aa).

The protein belongs to the gamma-glutamyl phosphate reductase family.

The protein resides in the cytoplasm. It carries out the reaction L-glutamate 5-semialdehyde + phosphate + NADP(+) = L-glutamyl 5-phosphate + NADPH + H(+). The protein operates within amino-acid biosynthesis; L-proline biosynthesis; L-glutamate 5-semialdehyde from L-glutamate: step 2/2. Functionally, catalyzes the NADPH-dependent reduction of L-glutamate 5-phosphate into L-glutamate 5-semialdehyde and phosphate. The product spontaneously undergoes cyclization to form 1-pyrroline-5-carboxylate. This chain is Gamma-glutamyl phosphate reductase, found in Lactiplantibacillus plantarum (strain ATCC BAA-793 / NCIMB 8826 / WCFS1) (Lactobacillus plantarum).